The following is a 356-amino-acid chain: WAT1-related protein At1g68170 (356 aa).

The next 10 membrane-spanning stretches (helical) occupy residues 4–24, 33–53, 65–85, 94–114, 125–145, 176–196, 210–230, 245–265, 273–293, and 298–318; these read ITAM…FKLA, VLVA…CFIF, LMLL…ILTI, TFTS…AALL, VGLA…VFIF, ISIL…LWFL, WNAT…ALCW, LLTI…VNAW, LFVS…GSFL, and LHLG…IVLW. EamA domains are found at residues 14–142 and 191–317; these read TAGL…GALV and ISLW…YIVL.

This sequence belongs to the drug/metabolite transporter (DMT) superfamily. Plant drug/metabolite exporter (P-DME) (TC 2.A.7.4) family.

The protein resides in the membrane. The protein is WAT1-related protein At1g68170 of Arabidopsis thaliana (Mouse-ear cress).